We begin with the raw amino-acid sequence, 239 residues long: Ribonuclease PH (239 aa).

Phosphate-binding positions include R86 and 124–126; that span reads GTR.

It belongs to the RNase PH family. As to quaternary structure, homohexameric ring arranged as a trimer of dimers.

It catalyses the reaction tRNA(n+1) + phosphate = tRNA(n) + a ribonucleoside 5'-diphosphate. Phosphorolytic 3'-5' exoribonuclease that plays an important role in tRNA 3'-end maturation. Removes nucleotide residues following the 3'-CCA terminus of tRNAs; can also add nucleotides to the ends of RNA molecules by using nucleoside diphosphates as substrates, but this may not be physiologically important. Probably plays a role in initiation of 16S rRNA degradation (leading to ribosome degradation) during starvation. The protein is Ribonuclease PH of Rickettsia bellii (strain OSU 85-389).